A 242-amino-acid polypeptide reads, in one-letter code: Type III pantothenate kinase (242 aa).

Asp6 to Lys13 lines the ATP pocket. Residues Tyr90 and Gly97 to Arg100 each bind substrate. Catalysis depends on Asp99, which acts as the Proton acceptor. ATP is bound at residue Thr122. Thr172 contributes to the substrate binding site.

This sequence belongs to the type III pantothenate kinase family. Homodimer. Requires NH4(+) as cofactor. K(+) serves as cofactor.

It is found in the cytoplasm. The enzyme catalyses (R)-pantothenate + ATP = (R)-4'-phosphopantothenate + ADP + H(+). It participates in cofactor biosynthesis; coenzyme A biosynthesis; CoA from (R)-pantothenate: step 1/5. Functionally, catalyzes the phosphorylation of pantothenate (Pan), the first step in CoA biosynthesis. The protein is Type III pantothenate kinase of Aromatoleum aromaticum (strain DSM 19018 / LMG 30748 / EbN1) (Azoarcus sp. (strain EbN1)).